Here is a 212-residue protein sequence, read N- to C-terminus: UPF0502 protein ECA2523 (212 aa).

The protein belongs to the UPF0502 family.

The protein is UPF0502 protein ECA2523 of Pectobacterium atrosepticum (strain SCRI 1043 / ATCC BAA-672) (Erwinia carotovora subsp. atroseptica).